Here is a 173-residue protein sequence, read N- to C-terminus: Dirigent protein 8 (173 aa).

An N-terminal signal peptide occupies residues 1 to 22 (MTNLILIFAAQILLFYAVASVG). Asparagine 69, asparagine 90, and asparagine 125 each carry an N-linked (GlcNAc...) asparagine glycan.

This sequence belongs to the plant dirigent protein family. As to quaternary structure, homodimer.

It localises to the secreted. It is found in the extracellular space. The protein localises to the apoplast. Its function is as follows. Dirigent proteins impart stereoselectivity on the phenoxy radical-coupling reaction, yielding optically active lignans from two molecules of coniferyl alcohol in the biosynthesis of lignans, flavonolignans, and alkaloids and thus plays a central role in plant secondary metabolism. In Arabidopsis thaliana (Mouse-ear cress), this protein is Dirigent protein 8 (DIR8).